Consider the following 484-residue polypeptide: Cobyric acid synthase (484 aa).

A GATase cobBQ-type domain is found at 251-438 (ALKIAVPVLP…LHGLFCSDAY (188 aa)). The active-site Nucleophile is Cys333. His430 is an active-site residue.

The protein belongs to the CobB/CobQ family. CobQ subfamily.

Its pathway is cofactor biosynthesis; adenosylcobalamin biosynthesis. Functionally, catalyzes amidations at positions B, D, E, and G on adenosylcobyrinic A,C-diamide. NH(2) groups are provided by glutamine, and one molecule of ATP is hydrogenolyzed for each amidation. The sequence is that of Cobyric acid synthase from Rhizobium rhizogenes (strain K84 / ATCC BAA-868) (Agrobacterium radiobacter).